A 210-amino-acid chain; its full sequence is MTSKCTLPDLPYDYDALEPIISKQIMELHHKKHHQTYVNNLNAALASQASALDSNDITQLISIQQKLKFNGGGHINHSLFWKNLARYDSPATNLERSAPSLKDAIEKQWGSVKNFTDAFEAVLLGIQGSGWGWLVSSGKTGFLEIVTTKDQDPVTGPIPVFGVDMWEHAYYLQYLNNKASYVQNIWKVINWEEAEHRYLNGTEELGSLKL.

Positions 29, 77, 164, and 168 each coordinate Mn(2+).

This sequence belongs to the iron/manganese superoxide dismutase family. In terms of assembly, homotetramer. The cofactor is Mn(2+).

It is found in the mitochondrion matrix. It catalyses the reaction 2 superoxide + 2 H(+) = H2O2 + O2. Its function is as follows. Destroys superoxide anion radicals which are normally produced within the cells and which are toxic to biological systems. The sequence is that of Superoxide dismutase [Mn], mitochondrial (sodB) from Aspergillus niger.